The sequence spans 361 residues: 3-galactosyl-N-acetylglucosaminide 4-alpha-L-fucosyltransferase FUT3 (361 aa).

The Cytoplasmic portion of the chain corresponds to 1-15 (MDPLGAAKPQWPWRR). The chain crosses the membrane as a helical; Signal-anchor for type II membrane protein span at residues 16 to 34 (CLAALLFQLLVAVCFFSYL). Residues 35 to 361 (RVSRDDATGS…TVRSIAAWFT (327 aa)) lie on the Lumenal side of the membrane. Residues 39 to 58 (DDATGSPRAPSGSSRQDTTP) form a disordered region. Residues N154 and N185 are each glycosylated (N-linked (GlcNAc...) asparagine).

The protein belongs to the glycosyltransferase 10 family. In terms of processing, glycosylated. Highly expressed in stomach, colon, small intestine, lung and kidney and to a lesser extent in salivary gland, bladder, uterus and liver.

It localises to the golgi apparatus. The protein resides in the golgi stack membrane. The catalysed reaction is a beta-D-galactosyl-(1-&gt;3)-N-acetyl-beta-D-glucosaminyl derivative + GDP-beta-L-fucose = a beta-D-galactosyl-(1-&gt;3)-[alpha-L-fucosyl-(1-&gt;4)]-N-acetyl-beta-D-glucosaminyl derivative + GDP + H(+). It catalyses the reaction an N-acetyl-alpha-neuraminyl-(2-&gt;3)-beta-D-galactosyl-(1-&gt;4)-N-acetyl-beta-D-glucosaminyl derivative + GDP-beta-L-fucose = an alpha-Neu5Ac-(2-&gt;3)-beta-D-Gal-(1-&gt;4)-[alpha-L-Fuc-(1-&gt;3)]-beta-D-GlcNAc derivative + GDP + H(+). It carries out the reaction a beta-D-galactosyl-(1-&gt;4)-N-acetyl-beta-D-glucosaminyl derivative + GDP-beta-L-fucose = a beta-D-galactosyl-(1-&gt;4)-[alpha-L-fucosyl-(1-&gt;3)]-N-acetyl-beta-D-glucosaminyl derivative + GDP + H(+). The enzyme catalyses an alpha-Neu5Ac-(2-&gt;3)-beta-D-Gal-(1-&gt;4)-beta-D-GlcNAc-(1-&gt;3)-beta-D-Gal-(1-&gt;4)-[alpha-L-Fuc-(1-&gt;3)]-beta-D-GlcNAc derivative + GDP-beta-L-fucose = an alpha-Neu5Ac-(2-&gt;3)-beta-D-Gal-(1-&gt;4)-[alpha-L-Fuc-(1-&gt;3)]-beta-D-GlcNAc-(1-&gt;3)-beta-D-Gal-(1-&gt;4)-[alpha-L-Fuc-(1-&gt;3)]-beta-D-GlcNAc derivative + GDP + H(+). The catalysed reaction is Lc4Cer + GDP-beta-L-fucose = a lactoside III(4)-a-Fuc-Lc4Cer + GDP + H(+). It catalyses the reaction a beta-D-Gal-(1-&gt;3)-beta-D-GlcNAc-(1-&gt;3)-beta-D-Gal-(1-&gt;4)-beta-D-Glc-(1&lt;-&gt;1')-Cer(d18:1(4E)) + GDP-beta-L-fucose = a III(4)-a-Fuc-Lc4Cer(d18:1(4E)) + GDP + H(+). It carries out the reaction N-acetyl-alpha-neuraminosyl-(2-&gt;3)-beta-D-galactosyl-(1-&gt;3)-[N-acetyl-alpha-neuraminosyl-(2-&gt;6)]-N-acetyl-beta-D-glucosaminyl-(1-&gt;3)-beta-D-galactosyl-(1-&gt;4)-beta-D-glucosyl-(1&lt;-&gt;1')-N-acyl-sphing-4-enine + GDP-beta-L-fucose = N-acetyl-alpha-neuraminosyl-(2-&gt;3)-beta-D-galactosyl-(1-&gt;3)-alpha-L-fucosyl-(1-&gt;4)-[N-acetyl-alpha-neuraminosyl-(2-&gt;6)-N-acetyl-beta-D-glucosaminyl-(1-&gt;3)]-beta-D-galactosyl-(1-&gt;4)-beta-D-glucosyl-(1&lt;-&gt;1')-N-acyl-sphing-4-enine + GDP + H(+). The enzyme catalyses N-acetyl-alpha-neuraminosyl-(2-&gt;3)-beta-D-galactosyl-(1-&gt;3)-N-acetyl-beta-D-glucosaminyl-(1-&gt;3)-beta-D-galactosyl-(1-&gt;4)-beta-D-glucosyl-(1&lt;-&gt;1')-N-acyl-sphing-4-enine + GDP-beta-L-fucose = N-acetyl-alpha-neuraminosyl-(2-&gt;3)-beta-D-galactosyl-(1-&gt;3)-alpha-L-fucosyl-(1-&gt;4)-[N-acetyl-beta-D-glucosaminyl-(1-&gt;3)]-beta-D-galactosyl-(1-&gt;4)-beta-D-glucosyl-(1&lt;-&gt;1')-N-acyl-sphing-4-enine + GDP + H(+). The catalysed reaction is beta-D-galactosyl-(1-&gt;3)-N-acetyl-D-glucosamine + GDP-beta-L-fucose = beta-D-galactosyl-(1-&gt;3)-[alpha-L-fucosyl-(1-&gt;4)]-N-acetyl-D-glucosamine + GDP + H(+). It catalyses the reaction alpha-L-Fuc-(1-&gt;2)-beta-D-Gal-(1-&gt;3)-D-GlcNAc + GDP-beta-L-fucose = alpha-L-Fuc-(1-&gt;2)-beta-D-Gal-(1-&gt;3)-[alpha-L-Fuc-(1-&gt;4)]-D-GlcNAc + GDP + H(+). It carries out the reaction alpha-L-Fuc-(1-&gt;2)-beta-D-Gal-(1-&gt;4)-D-GlcNAc + GDP-beta-L-fucose = alpha-L-Fuc-(1-&gt;2)-beta-D-Gal-(1-&gt;4)-[alpha-L-Fuc-(1-&gt;3)]-D-GlcNAc + GDP + H(+). The enzyme catalyses beta-D-galactosyl-(1-&gt;4)-N-acetyl-D-glucosamine + GDP-beta-L-fucose = beta-D-galactosyl-(1-&gt;4)-[alpha-L-fucosyl-(1-&gt;3)]-N-acetyl-D-glucosamine + GDP + H(+). The catalysed reaction is lactose + GDP-beta-L-fucose = beta-D-galactosyl-(1-&gt;4)-[alpha-L-fucosyl-(1-&gt;3)]-D-glucose + GDP + H(+). It catalyses the reaction an alpha-Neu5Ac-(2-&gt;3)-beta-D-Gal-(1-&gt;3)-D-GlcNAc derivative + GDP-beta-L-fucose = an alpha-Neu5Ac-(2-&gt;3)-beta-D-Gal-(1-&gt;3)-[alpha-L-Fuc-(1-&gt;4)]-beta-D-GlcNAc derivative + GDP + H(+). Its pathway is protein modification; protein glycosylation. Functionally, catalyzes the transfer of L-fucose, from a guanosine diphosphate-beta-L-fucose, to both the subterminal N-acetyl glucosamine (GlcNAc) of type 1 chain (beta-D-Gal-(1-&gt;3)-beta-D-GlcNAc) glycolipids and oligosaccharides via an alpha(1,4) linkage, and the subterminal glucose (Glc) or GlcNAc of type 2 chain (beta-D-Gal-(1-&gt;4)-beta-D-GlcNAc) oligosaccharides via an alpha(1,3) linkage, independently of the presence of terminal alpha-L-fucosyl-(1,2) moieties on the terminal galactose of these acceptors. Through its catalytic activity, participates in the synthesis of antigens of the Lewis blood group system, i.e. Lewis a (Le(a)), lewis b (Le(b)), Lewis x/SSEA-1 (Le(x)) and lewis y (Le(y)) antigens. Also catalyzes the transfer of L-fucose to subterminal GlcNAc of sialyl- and disialyl-lactotetraosylceramide to produce sialyl Lewis a (sLe(a)) and disialyl Lewis a via an alpha(1,4) linkage and therefore may regulate cell surface sLe(a) expression and consequently regulates adhesive properties to E-selectin, cell proliferation and migration. Catalyzes the transfer of an L-fucose to 3'-sialyl-N-acetyllactosamine by an alpha(1,3) linkage, which allows the formation of sialyl-Lewis x structure and therefore may regulate the sialyl-Lewis x surface antigen expression and consequently adhesive properties to E-selectin. Prefers type 1 chain over type 2 acceptors. Type 1 tetrasaccharide is a better acceptor than type 1 disaccharide suggesting that a beta anomeric configuration of GlcNAc in the substrate is preferred. Lewis-positive (Le(+)) individuals have an active enzyme while Lewis-negative (Le(-)) individuals have an inactive enzyme. The protein is 3-galactosyl-N-acetylglucosaminide 4-alpha-L-fucosyltransferase FUT3 of Homo sapiens (Human).